Here is a 340-residue protein sequence, read N- to C-terminus: Thylakoidal processing peptidase 1, chloroplastic (340 aa).

The transit peptide at M1–P52 directs the protein to the chloroplast. The chain crosses the membrane as a helical span at residues E155–A175. At E176–S340 the chain is on the lumenal, thylakoid side. S184 is a catalytic residue.

Belongs to the peptidase S26 family.

The protein localises to the plastid. The protein resides in the chloroplast thylakoid membrane. The catalysed reaction is Cleavage of hydrophobic, N-terminal signal or leader sequences from secreted and periplasmic proteins.. Its function is as follows. Cleaves the thylakoid-transfer domain from a chloroplast protein. The chain is Thylakoidal processing peptidase 1, chloroplastic (TPP1) from Arabidopsis thaliana (Mouse-ear cress).